The chain runs to 205 residues: Putative 3-methyladenine DNA glycosylase (205 aa).

This sequence belongs to the DNA glycosylase MPG family.

The polypeptide is Putative 3-methyladenine DNA glycosylase (Bacillus cereus (strain G9842)).